Reading from the N-terminus, the 96-residue chain is UPF0235 protein YggU (96 aa).

The protein belongs to the UPF0235 family.

The protein is UPF0235 protein YggU of Salmonella typhimurium (strain LT2 / SGSC1412 / ATCC 700720).